Reading from the N-terminus, the 596-residue chain is Fc receptor-like protein 5 (596 aa).

The first 26 residues, 1 to 26, serve as a signal peptide directing secretion; that stretch reads MSGSFSPCVVFTQMWLTLLVVTPVNG. At 27-496 the chain is on the extracellular side; it reads QHEAAQQSVV…MTKNRSVPMA (470 aa). Ig-like C2-type domains are found at residues 34 to 115, 106 to 199, 207 to 294, 296 to 384, and 398 to 483; these read SVVS…VEFS, PSMH…NTVV, PRPV…TAFI, PVQR…SFVS, and PVLT…IRIS. Disulfide bonds link C55–C99, C137–C181, and C228–C277. Residue N324 is glycosylated (N-linked (GlcNAc...) asparagine). 2 disulfides stabilise this stretch: C325/C373 and C419/C466. N-linked (GlcNAc...) asparagine glycosylation is present at N436. Residues 497–517 form a helical membrane-spanning segment; the sequence is AGITVGLLIMAVGVFLFYCWF. Topologically, residues 518-596 are cytoplasmic; it reads SRKAGGKPTS…RSRCQMAEKK (79 aa). 2 disordered regions span residues 522-544 and 561-596; these read GGKPTSDDSRNPSDSEPQEPTYY and EENVIYTEVRRTQPRQKHADQESESPRSRCQMAEKK. Residues 577 to 596 show a composition bias toward basic and acidic residues; that stretch reads KHADQESESPRSRCQMAEKK.

Interacts with CR2. Interacts with CD19. Phosphorylated on cytoplasmic tyrosines; required for interaction with protein tyrosine phosphatases and protein tyrosine kinases. As to expression, preferentially expressed in marginal zone B cells.

The protein localises to the cell membrane. Its function is as follows. Plays an important role in B-cell response to antigen that acts both as a negative or positive coreceptor. Inhibits B-cell receptor (BCR) signaling in the absence of CR2 stimulation but engagement with CR2 and the BCR lead to a superior calcium response compared to CR2 and BCR costimulation. May be involved in B-cell development and differentiation in peripheral lymphoid organs and may be useful markers of B-cell stages. May have an immunoregulatory role in marginal zone B-cells. May play a role in fertilization. In Mus musculus (Mouse), this protein is Fc receptor-like protein 5 (Fcrl5).